An 856-amino-acid chain; its full sequence is DNA mismatch repair protein MutS (856 aa).

611–618 lines the ATP pocket; sequence GPNMGGKS.

Belongs to the DNA mismatch repair MutS family.

In terms of biological role, this protein is involved in the repair of mismatches in DNA. It is possible that it carries out the mismatch recognition step. This protein has a weak ATPase activity. The polypeptide is DNA mismatch repair protein MutS (Histophilus somni (strain 129Pt) (Haemophilus somnus)).